Here is a 635-residue protein sequence, read N- to C-terminus: Interferon-induced GTP-binding protein Mx1 (635 aa).

The region spanning 31-309 (DLALPAIAVI…LVHHIELSLP (279 aa)) is the Dynamin-type G domain. The G1 motif stretch occupies residues 41–48 (GDQSSGKS). 41–48 (GDQSSGKS) is a GTP binding site. The tract at residues 66-68 (VTR) is G2 motif. A G3 motif region spans residues 147 to 150 (DLPG). GTP contacts are provided by residues 147 to 151 (DLPGI) and 216 to 219 (TKPD). The interval 216–219 (TKPD) is G4 motif. The segment at 248–251 (RCRG) is G5 motif. One can recognise a GED domain in the interval 549 to 635 (LEELMRHLKS…MEARNYLVKF (87 aa)).

It belongs to the TRAFAC class dynamin-like GTPase superfamily. Dynamin/Fzo/YdjA family.

The protein resides in the cytoplasm. This Ictalurus punctatus (Channel catfish) protein is Interferon-induced GTP-binding protein Mx1 (mx1).